The following is a 626-amino-acid chain: Chaperone protein HtpG (626 aa).

The interval 1–343 is a; substrate-binding; that stretch reads MHKQTLSFQA…SADLPLNVSR (343 aa). A b region spans residues 344–558; that stretch reads ELLQESRAVK…DGDMSTQLAR (215 aa). A c region spans residues 559 to 626; it reads MLKQAGQAVP…YVKRVNALLV (68 aa).

This sequence belongs to the heat shock protein 90 family. As to quaternary structure, homodimer.

The protein resides in the cytoplasm. Molecular chaperone. Has ATPase activity. This Polaromonas sp. (strain JS666 / ATCC BAA-500) protein is Chaperone protein HtpG.